Here is a 782-residue protein sequence, read N- to C-terminus: Cadherin-5 (782 aa).

Positions 1–22 are cleaved as a signal peptide; that stretch reads MQVLVMLLAAAGTYLGLLTAPT. The propeptide occupies 23-44; the sequence is AASNPGRQDTPSTLPLHRRQKR. Cadherin domains lie at 45–148, 149–255, 256–370, 371–475, and 476–592; these read DWIW…WPVF, TQLV…FPVF, TQTR…PPNF, KQPF…DNAP, and EFAK…MGAQ. The Extracellular portion of the chain corresponds to 45-598; it reads DWIWNQMHID…MGAQVGVSIQ (554 aa). Ca(2+)-binding residues include glutamate 55 and glutamate 56. An N-linked (GlcNAc...) asparagine glycan is attached at asparagine 58. Ca(2+) is bound by residues aspartate 106, glutamate 108, aspartate 140, isoleucine 141, asparagine 142, aspartate 143, and asparagine 144. Asparagine 154 is a glycosylation site (N-linked (GlcNAc...) asparagine). 4 residues coordinate Ca(2+): aspartate 174, aspartate 176, histidine 183, and aspartate 228. Asparagine 360, asparagine 440, asparagine 522, and asparagine 534 each carry an N-linked (GlcNAc...) asparagine glycan. A helical transmembrane segment spans residues 599 to 619; it reads ALVAIFLCILTIAVISLLVYL. The segment at 620 to 659 is required for interaction with PALS1; the sequence is RRRLRKQARAHGKSVPEIHEQLVTYDEEGGGEMDTTSYDV. The Cytoplasmic portion of the chain corresponds to 620–782; the sequence is RRRLRKQARA…GSDPREELLY (163 aa).

As to quaternary structure, part of a complex composed of AMOTL2, MAGI1 and CDH5, within the complex AMOTL2 acts as a scaffold protein for the interaction of MAGI1 with CDH5. The complex is required for coupling actin fibers to cell junctions in endothelial cells. Within the complex AMOTL2 (via its N-terminus) interacts with CDH5. Interacts (via cadherin 5 domain) with PTPRB. Interacts with TRPC4. Interacts with KRIT1. Interacts with PARD3. Interacts with RTN4 (isoform B). Interacts with PALS1; the interaction promotes PALS1 localization to cell junctions and is required for CDH5-mediated vascular lumen formation and endothelial cell. Interacts with CTNND1/p120-catenin; the interaction controls CADH5 endocytosis. Post-translationally, phosphorylated on tyrosine residues by KDR/VEGFR-2. Dephosphorylated by PTPRB. O-glycosylated.

The protein resides in the cell junction. The protein localises to the adherens junction. Its subcellular location is the cell membrane. It localises to the cytoplasm. Cadherins are calcium-dependent cell adhesion proteins. They preferentially interact with themselves in a homophilic manner in connecting cells; cadherins may thus contribute to the sorting of heterogeneous cell types. This cadherin may play a important role in endothelial cell biology through control of the cohesion and organization of the intercellular junctions. It associates with alpha-catenin forming a link to the cytoskeleton. Plays a role in coupling actin fibers to cell junctions in endothelial cells, via acting as a cell junctional complex anchor for AMOTL2 and MAGI1. Acts in concert with KRIT1 and PALS1 to establish and maintain correct endothelial cell polarity and vascular lumen. These effects are mediated by recruitment and activation of the Par polarity complex and RAP1B. Required for activation of PRKCZ and for localization of phosphorylated PRKCZ, PARD3, TIAM1 and RAP1B to the cell junction. Associates with CTNND1/p120-catenin to control CADH5 endocytosis. This chain is Cadherin-5, found in Sus scrofa (Pig).